Reading from the N-terminus, the 286-residue chain is Phospholipase A1 (286 aa).

The N-terminal stretch at 1 to 20 (MRISLACLAALCALPAGVMA) is a signal peptide. Over 21 to 49 (QDASVHDKPAVRGSIIANLLQDHDNPFLL) the chain is Periplasmic. The chain crosses the membrane as a beta stranded span at residues 50–62 (YPYESNYLLYTWT). The Extracellular segment spans residues 63-81 (SDLNKEAIRSYDWAENARK). A beta stranded transmembrane segment spans residues 82 to 96 (DEVKFQLSLAFPLWR). The Periplasmic portion of the chain corresponds to 97–102 (GILGDN). Residues 103 to 115 (SLLGASYTQKSWW) form a beta stranded membrane-spanning segment. At 116–125 (QLSNSKESAP) the chain is on the extracellular side. S123 provides a ligand contact to Ca(2+). Residues 126 to 145 (FRETNYEPQLFLGFATDYQF) traverse the membrane as a beta stranded segment. The Periplasmic portion of the chain corresponds to 146–147 (AG). The chain crosses the membrane as a beta stranded span at residues 148–161 (WTLRDIEMGYNHDS). The active-site Proton acceptor is the H159. Catalysis depends on S161, which acts as the Nucleophile. The Extracellular portion of the chain corresponds to 162-170 (NGRSDPTSR). Residues R164 and S169 each coordinate Ca(2+). A beta stranded membrane pass occupies residues 171 to 183 (SWNRLYARLMAQN). Over 184–185 (GN) the chain is Periplasmic. A beta stranded transmembrane segment spans residues 186–195 (WLVEVKPWYV). Over 196 to 213 (VGSTDDNPDITKYMGYYR) the chain is Extracellular. D201 contributes to the Ca(2+) binding site. A beta stranded transmembrane segment spans residues 214–220 (LKVGYQL). Topologically, residues 221–222 (GE) are periplasmic. The beta stranded transmembrane segment at 223-231 (AILSAQGQY) threads the bilayer. The Extracellular segment spans residues 232 to 238 (NWNTGYG). Residues 239–247 (GAELGVSYP) form a beta stranded membrane-spanning segment. At 248-252 (ITKHV) the chain is on the periplasmic side. The beta stranded transmembrane segment at 253-262 (RAYTQIYSGY) threads the bilayer. The Extracellular segment spans residues 263-271 (GESLIDYNF). Residues 272 to 283 (NQTRVGVGLMLN) form a beta stranded membrane-spanning segment. Topologically, residues 284–286 (DLF) are periplasmic.

It belongs to the phospholipase A1 family. As to quaternary structure, homodimer; dimerization is reversible, and the dimeric form is the active one. Requires Ca(2+) as cofactor.

It is found in the cell outer membrane. The catalysed reaction is a 1,2-diacyl-sn-glycero-3-phosphocholine + H2O = a 2-acyl-sn-glycero-3-phosphocholine + a fatty acid + H(+). It carries out the reaction a 1,2-diacyl-sn-glycero-3-phosphocholine + H2O = a 1-acyl-sn-glycero-3-phosphocholine + a fatty acid + H(+). Hydrolysis of phosphatidylcholine with phospholipase A2 (EC 3.1.1.4) and phospholipase A1 (EC 3.1.1.32) activities. In Klebsiella pneumoniae, this protein is Phospholipase A1 (pldA).